The following is a 290-amino-acid chain: HTH-type transcriptional activator RhaR (290 aa).

Residues 179–277 (DLIMSALQQS…GMTPRDYRQR (99 aa)) form the HTH araC/xylS-type domain. 2 DNA-binding regions (H-T-H motif) span residues 196–217 (ADFC…RQQT) and 244–267 (ISDI…TREA).

As to quaternary structure, binds DNA as a dimer.

The protein resides in the cytoplasm. In terms of biological role, activates expression of the rhaSR operon in response to L-rhamnose. The protein is HTH-type transcriptional activator RhaR of Yersinia pestis bv. Antiqua (strain Antiqua).